The sequence spans 488 residues: Tripartite motif-containing protein 6 (488 aa).

The segment at 15 to 60 (CPICLELLTEPLSIDCGHSFCQVCIIGNSNNSVFGQGGRSSCPVCR) adopts an RING-type zinc-finger fold. A B box-type zinc finger spans residues 92–133 (LEVIFCALHGEKLQLFCKEDGKLICWLCERSQEHRGHHTFLM). 4 residues coordinate Zn(2+): cysteine 97, histidine 100, cysteine 119, and histidine 125. Residues 132-223 (LMEEVAQEYQ…SIIEKAEGDL (92 aa)) adopt a coiled-coil conformation. A B30.2/SPRY domain is found at 282–488 (DLRKMLKVFR…VPMTLRRPTS (207 aa)).

It belongs to the TRIM/RBCC family. In terms of assembly, homotrimer. Forms heteromultimers (via B30.2/SPRY domain) with TRIM5. Interacts with MYC. Interacts (via SPRY domain) with IKBKE. Interacts with VAMP8; this interaction contributes to the activation of the type I interferon antiviral response. Interacts with DHX16.

The protein resides in the cytoplasm. It catalyses the reaction S-ubiquitinyl-[E2 ubiquitin-conjugating enzyme]-L-cysteine + [acceptor protein]-L-lysine = [E2 ubiquitin-conjugating enzyme]-L-cysteine + N(6)-ubiquitinyl-[acceptor protein]-L-lysine.. It participates in protein modification; protein ubiquitination. Functionally, E3 ubiquitin ligase that plays a crucial role in the activation of the IKBKE-dependent branch of the type I interferon signaling pathway. In concert with the ubiquitin-conjugating E2 enzyme UBE2K, synthesizes unanchored 'Lys-48'-linked polyubiquitin chains that promote the oligomerization and autophosphorylation of IKBKE leading to stimulation of an antiviral response. Also ubiquitinates MYC and inhibits its transcription activation activity, maintaining the pluripotency of embryonic stem cells. Promotes the association of unanchored 'Lys-48'-polyubiquitin chains with DHX16 leading to enhancement of RIGI-mediated innate antiviral immune response. This chain is Tripartite motif-containing protein 6 (Trim6), found in Mus musculus (Mouse).